Here is a 244-residue protein sequence, read N- to C-terminus: 14-3-3 protein beta/alpha (244 aa).

Met-1 carries the N-acetylmethionine modification.

The protein belongs to the 14-3-3 family. In terms of assembly, homodimer, and heterodimer with other family members.

The protein resides in the cytoplasm. In terms of biological role, adapter protein implicated in the regulation of a large spectrum of both general and specialized signaling pathways. Binds to a large number of partners, usually by recognition of a phosphoserine or phosphothreonine motif. Binding generally results in the modulation of the activity of the binding partner. The protein is 14-3-3 protein beta/alpha (ywhab) of Xenopus tropicalis (Western clawed frog).